The chain runs to 206 residues: MVFSSYMLPALPYDYDALEPVISAEIMQLHHQKHHQGYINNLNEALKSLDVANATQDLARLIAINPALRFNGGSHINHSLFWEMLAPQGKGGGVPPRHELLKLIEKFWGSFDNFLKNFITSSAAVQGSGWGWLAFCPQKQELMVQTTANQDPLEATTGMIPLLGVDVWEHAYYLQYKNARMDYLKSFPSIINWDYIENRFVEMSKQ.

His-30, His-78, Asp-166, and His-170 together coordinate Mn(2+).

The protein belongs to the iron/manganese superoxide dismutase family. In terms of assembly, homodimer. Requires Mn(2+) as cofactor.

It carries out the reaction 2 superoxide + 2 H(+) = H2O2 + O2. In terms of biological role, destroys superoxide anion radicals which are normally produced within the cells and which are toxic to biological systems. The protein is Superoxide dismutase [Mn] (sodA) of Chlamydia trachomatis serovar D (strain ATCC VR-885 / DSM 19411 / UW-3/Cx).